The chain runs to 199 residues: Large ribosomal subunit protein mL51 (199 aa).

The transit peptide at 1 to 15 directs the protein to the mitochondrion; that stretch reads MNSASISRLTSVIRT.

The protein belongs to the mitochondrion-specific ribosomal protein mL51 family. Component of the mitochondrial ribosome large subunit (39S) which comprises a 16S rRNA and about 50 distinct proteins.

The protein localises to the mitochondrion. In Caenorhabditis briggsae, this protein is Large ribosomal subunit protein mL51 (mrpl-51).